A 957-amino-acid polypeptide reads, in one-letter code: Glycine dehydrogenase (decarboxylating) 2 (957 aa).

An N6-(pyridoxal phosphate)lysine modification is found at Lys707.

This sequence belongs to the GcvP family. As to quaternary structure, the glycine cleavage system is composed of four proteins: P, T, L and H. Requires pyridoxal 5'-phosphate as cofactor.

The catalysed reaction is N(6)-[(R)-lipoyl]-L-lysyl-[glycine-cleavage complex H protein] + glycine + H(+) = N(6)-[(R)-S(8)-aminomethyldihydrolipoyl]-L-lysyl-[glycine-cleavage complex H protein] + CO2. In terms of biological role, the glycine cleavage system catalyzes the degradation of glycine. The P protein binds the alpha-amino group of glycine through its pyridoxal phosphate cofactor; CO(2) is released and the remaining methylamine moiety is then transferred to the lipoamide cofactor of the H protein. This chain is Glycine dehydrogenase (decarboxylating) 2, found in Pseudomonas fluorescens (strain ATCC BAA-477 / NRRL B-23932 / Pf-5).